A 410-amino-acid chain; its full sequence is MQFSSSIRQFLDKKRIVEFTKIQQAVFKLWPFQNIIGIAETGSGKTFAYLLPLLDKINTSLDQPQAVIFVPTKELQWQIINILTEIKKYFKTFTFATSFSSKAQLIVSLLNEKYLFTSKVRYVVFDEIDMFLEQSSIQQWLECVHLFQKAKPLFAFFSATLFNQQLQIIKKQVINTKVINLHPKQWIHPLVKHFVVHLNTENRFSGLLALLKHHQNQQIIVFCSNQKSLKQLTQLLSNNNISFGSIYGSLTYQERKNNFTKATNNKLKLLVVSDLFSRGIDLNYFSVVISWDLPKIDSFYIHRSGRVARLNSWGRSYLFWNDQNQSKLNKLIAKGIKFQNVSLTSNGDLKFLTENNQKTTKKPLSTLQIKKIKAIKAKYKKVKPNYKKYQKQQIQNLLINKKKPRSWKNF.

In terms of domain architecture, Helicase ATP-binding spans 26-179 (VFKLWPFQNI…KKQVINTKVI (154 aa)). Residue 39 to 46 (AETGSGKT) coordinates ATP. A DEID box motif is present at residues 126–129 (DEID). One can recognise a Helicase C-terminal domain in the interval 190-357 (LVKHFVVHLN…DLKFLTENNQ (168 aa)).

The protein belongs to the DEAD box helicase family.

It catalyses the reaction ATP + H2O = ADP + phosphate + H(+). The protein is Probable ATP-dependent RNA helicase MG308 of Mycoplasma genitalium (strain ATCC 33530 / DSM 19775 / NCTC 10195 / G37) (Mycoplasmoides genitalium).